Consider the following 96-residue polypeptide: Co-chaperonin GroES 2 (96 aa).

It belongs to the GroES chaperonin family. In terms of assembly, heptamer of 7 subunits arranged in a ring. Interacts with the chaperonin GroEL.

It is found in the cytoplasm. Its function is as follows. Together with the chaperonin GroEL, plays an essential role in assisting protein folding. The GroEL-GroES system forms a nano-cage that allows encapsulation of the non-native substrate proteins and provides a physical environment optimized to promote and accelerate protein folding. GroES binds to the apical surface of the GroEL ring, thereby capping the opening of the GroEL channel. The polypeptide is Co-chaperonin GroES 2 (Vibrio parahaemolyticus serotype O3:K6 (strain RIMD 2210633)).